We begin with the raw amino-acid sequence, 511 residues long: Histidine ammonia-lyase (511 aa).

The segment at residues 142–144 (ASG) is a cross-link (5-imidazolinone (Ala-Gly)). The residue at position 143 (S143) is a 2,3-didehydroalanine (Ser).

This sequence belongs to the PAL/histidase family. Contains an active site 4-methylidene-imidazol-5-one (MIO), which is formed autocatalytically by cyclization and dehydration of residues Ala-Ser-Gly.

The protein resides in the cytoplasm. It carries out the reaction L-histidine = trans-urocanate + NH4(+). The protein operates within amino-acid degradation; L-histidine degradation into L-glutamate; N-formimidoyl-L-glutamate from L-histidine: step 1/3. The chain is Histidine ammonia-lyase from Rhizobium rhizogenes (Agrobacterium rhizogenes).